The following is a 78-amino-acid chain: Large ribosomal subunit protein bL28 (78 aa).

It belongs to the bacterial ribosomal protein bL28 family.

In Pectobacterium carotovorum subsp. carotovorum (strain PC1), this protein is Large ribosomal subunit protein bL28.